A 457-amino-acid polypeptide reads, in one-letter code: Methanethiol oxidase (457 aa).

This sequence belongs to the selenium-binding protein family.

It is found in the nucleus. The protein resides in the cytoplasm. It localises to the cytosol. The protein localises to the membrane. The enzyme catalyses methanethiol + O2 + H2O = hydrogen sulfide + formaldehyde + H2O2 + H(+). The protein operates within organosulfur degradation. In terms of biological role, catalyzes the oxidation of methanethiol, an organosulfur compound known to be produced in substantial amounts by gut bacteria. Selenium-binding protein which may be involved in the sensing of reactive xenobiotics in the cytoplasm. May be involved in intra-Golgi protein transport. In Danio rerio (Zebrafish), this protein is Methanethiol oxidase (selenbp1).